We begin with the raw amino-acid sequence, 116 residues long: Ribonuclease P protein component (116 aa).

This sequence belongs to the RnpA family. As to quaternary structure, consists of a catalytic RNA component (M1 or rnpB) and a protein subunit.

The enzyme catalyses Endonucleolytic cleavage of RNA, removing 5'-extranucleotides from tRNA precursor.. Its function is as follows. RNaseP catalyzes the removal of the 5'-leader sequence from pre-tRNA to produce the mature 5'-terminus. It can also cleave other RNA substrates such as 4.5S RNA. The protein component plays an auxiliary but essential role in vivo by binding to the 5'-leader sequence and broadening the substrate specificity of the ribozyme. This chain is Ribonuclease P protein component, found in Caldanaerobacter subterraneus subsp. tengcongensis (strain DSM 15242 / JCM 11007 / NBRC 100824 / MB4) (Thermoanaerobacter tengcongensis).